The sequence spans 68 residues: Protein SrnB (68 aa).

Residues 23 to 42 (YALIGLLAVCATVLCFSLIF) form a helical membrane-spanning segment.

It belongs to the Hok/Gef family.

Its subcellular location is the cell inner membrane. In terms of biological role, toxic component of a type I toxin-antitoxin (TA) system. Its normal function is believed to be effective plasmid stabilization through postsegregational killing of cells that have lost the F plasmid. Promotes degradation of stable RNA in E.coli. This Escherichia coli (strain K12) protein is Protein SrnB (srnB).